Reading from the N-terminus, the 282-residue chain is Small ribosomal subunit protein uS2 (282 aa).

The disordered stretch occupies residues lysine 260–arginine 282. A compositionally biased stretch (basic and acidic residues) spans valine 266–arginine 282.

Belongs to the universal ribosomal protein uS2 family.

This chain is Small ribosomal subunit protein uS2, found in Wolbachia sp. subsp. Drosophila simulans (strain wRi).